The following is a 199-amino-acid chain: Guanylate kinase (199 aa).

Residues G20–F198 form the Guanylate kinase-like domain. Residue G27 to G34 participates in ATP binding.

The protein belongs to the guanylate kinase family.

The protein resides in the cytoplasm. The enzyme catalyses GMP + ATP = GDP + ADP. In terms of biological role, essential for recycling GMP and indirectly, cGMP. This chain is Guanylate kinase, found in Trichormus variabilis (strain ATCC 29413 / PCC 7937) (Anabaena variabilis).